A 1155-amino-acid polypeptide reads, in one-letter code: DNA-directed RNA polymerase subunit beta (1155 aa).

The protein belongs to the RNA polymerase beta chain family. In terms of assembly, the RNAP catalytic core consists of 2 alpha, 1 beta, 1 beta' and 1 omega subunit. When a sigma factor is associated with the core the holoenzyme is formed, which can initiate transcription.

It catalyses the reaction RNA(n) + a ribonucleoside 5'-triphosphate = RNA(n+1) + diphosphate. DNA-dependent RNA polymerase catalyzes the transcription of DNA into RNA using the four ribonucleoside triphosphates as substrates. This Borrelia hermsii (strain HS1 / DAH) protein is DNA-directed RNA polymerase subunit beta.